A 244-amino-acid polypeptide reads, in one-letter code: N-(5'-phosphoribosyl)anthranilate isomerase 3, chloroplastic (244 aa).

Residues 1–32 (MSTGISSDLHLHPRALNFSKTSKSGLSNRKVS) constitute a chloroplast transit peptide.

The protein belongs to the TrpF family.

The protein localises to the plastid. The protein resides in the chloroplast. It catalyses the reaction N-(5-phospho-beta-D-ribosyl)anthranilate = 1-(2-carboxyphenylamino)-1-deoxy-D-ribulose 5-phosphate. It participates in amino-acid biosynthesis; L-tryptophan biosynthesis; L-tryptophan from chorismate: step 3/5. This Arabidopsis thaliana (Mouse-ear cress) protein is N-(5'-phosphoribosyl)anthranilate isomerase 3, chloroplastic (PAI3).